A 344-amino-acid polypeptide reads, in one-letter code: MSKKKGKTPQPAAKTMTASGPKMEAFTFGEPVPVLDRRDILDYVECISNGRWYEPPVSFTGLAKSLRAAVHHSSPIYVKRNILASTFIPHPWLSQQDFSRFVLDFLVFGNAFLEKRYSTTGKVIRLETSPAKYTRRGVEEDVYWWVPSFNEPTAFAPGSVFHLLEPDINQELYGLPEYLSALNSAWLNESATLFRRKYYENGAHAGYIMYVTDAVQDRNDIEMLRENMVKSKGRNNFKNLFLYAPQGKADGIKIIPLSEVATKDDFFNIKKASAADLLDAHRIPFQLMGGKPENVGSLGDIEKVAKVFVRNELIPLQDRIREINGWLGQEVIRFKNYSLDTDND.

This sequence belongs to the phage portal family. PBSX subfamily. As to quaternary structure, homododecamer.

The protein resides in the virion. Its function is as follows. Forms the portal vertex of the capsid. This portal plays critical roles in head assembly, genome packaging, neck/tail attachment, and genome ejection. The portal protein multimerizes as a single ring-shaped homododecamer arranged around a central channel. Binds to the terminase subunits to form the packaging machine. This chain is Probable portal protein (Q), found in Enterobacteriaceae (Bacteriophage P2).